The primary structure comprises 286 residues: 4-hydroxybenzoate octaprenyltransferase (286 aa).

The next 7 helical transmembrane spans lie at 22 to 42 (IGTL…EKAM), 45 to 65 (LSVL…GCVI), 98 to 118 (LFIV…LYTI), 143 to 163 (FFLG…TIEA), 213 to 233 (IIAL…YLSQ), 238 to 255 (YFIV…QCRL), and 266 to 286 (NAFL…LFGI).

Belongs to the UbiA prenyltransferase family. The cofactor is Mg(2+).

Its subcellular location is the cell inner membrane. The enzyme catalyses all-trans-octaprenyl diphosphate + 4-hydroxybenzoate = 4-hydroxy-3-(all-trans-octaprenyl)benzoate + diphosphate. The protein operates within cofactor biosynthesis; ubiquinone biosynthesis. Functionally, catalyzes the prenylation of para-hydroxybenzoate (PHB) with an all-trans polyprenyl group. Mediates the second step in the final reaction sequence of ubiquinone-8 (UQ-8) biosynthesis, which is the condensation of the polyisoprenoid side chain with PHB, generating the first membrane-bound Q intermediate 3-octaprenyl-4-hydroxybenzoate. This chain is 4-hydroxybenzoate octaprenyltransferase, found in Histophilus somni (strain 129Pt) (Haemophilus somnus).